Consider the following 184-residue polypeptide: MSSNSAVQSKSPLLPKENPPVKAFPDNIQVSSSLLSFLIYILYTFSISGLSTFVITKYYIRPQWLYTLALRRALIKLYYNFMDGFNKRTDTLQHRVDDKKILKTIEKWSCIKEKLRRVANITEQEQQCIPAESSLDLSIQAMKGVVNAELYQFGSQISGSLEFDTPIGNLQKQIVSLKSKMINI.

The helical transmembrane segment at 35–55 (LSFLIYILYTFSISGLSTFVI) threads the bilayer.

The protein resides in the membrane. This is an uncharacterized protein from Schizosaccharomyces pombe (strain 972 / ATCC 24843) (Fission yeast).